Consider the following 227-residue polypeptide: Esterase OVCA2 (227 aa).

Active-site charge relay system residues include S120, D180, and H207.

Belongs to the LovG family.

It carries out the reaction a carboxylic ester + H2O = an alcohol + a carboxylate + H(+). Functionally, exhibits ester hydrolase activity with a strong preference for long-chain alkyl ester substrates and high selectivity against a variety of short, branched, and substituted esters. Is able to hydrolyze ester bonds within a wide range of p-nitrophenyl derivatives (C2-C14) in vitro, with a strong preference toward substrates of &gt;8 carbons. The chain is Esterase OVCA2 (ovca2) from Danio rerio (Zebrafish).